We begin with the raw amino-acid sequence, 373 residues long: MKVANGYEYTAIMEKIAPKKLAMEGDPIGLQVGDLSRKVRKIMFTLDVLEEVVDEAIEKKVDLIIAHHPFLYRPTQHIDTTTKQGKMIKKLIKHDITVFAAHTNLDIAQGGVNNILADLLHLQNTTMIEETYSEPYCKIAVYVPENELESVRLALVNNGAGQIGTEYTECTFHTTGIGSFKPGANANPTIGEKDALTSVPEVKIEAIFPQYLTETITKAVKIAHPYEEPAIDVYTLEMQTYKEGLGRVGMLPKKLGMVSFIDKLKTAFAIDNVRFIGDLKTTVHKVAIIGGDGNKFIHQAKSTGADVFITGDVYYHTGHDLLAINLPTIDAGHNIEKVMKGYLKNKMEEQAKILDYEAEFIVSEVNTDPFQFC.

Positions 67, 68, 106, 333, and 336 each coordinate a divalent metal cation.

The protein belongs to the GTP cyclohydrolase I type 2/NIF3 family. Homohexamer.

This Listeria monocytogenes serovar 1/2a (strain ATCC BAA-679 / EGD-e) protein is GTP cyclohydrolase 1 type 2 homolog.